The sequence spans 224 residues: Ribonuclease T (224 aa).

A compositionally biased stretch (acidic residues) spans 1 to 11; the sequence is MSEDLYEDDQD. Positions 1 to 20 are disordered; it reads MSEDLYEDDQDSQVSSGSRH. The Exonuclease domain occupies 32-206; that stretch reads VVVDVETGGF…YDTEKTAELF (175 aa). Mg(2+) contacts are provided by Asp-35, Glu-37, His-193, and Asp-198. The active-site Proton donor/acceptor is the His-193.

This sequence belongs to the RNase T family. In terms of assembly, homodimer. Mg(2+) serves as cofactor.

Functionally, trims short 3' overhangs of a variety of RNA species, leaving a one or two nucleotide 3' overhang. Responsible for the end-turnover of tRNA: specifically removes the terminal AMP residue from uncharged tRNA (tRNA-C-C-A). Also appears to be involved in tRNA biosynthesis. This is Ribonuclease T from Pseudomonas entomophila (strain L48).